Consider the following 341-residue polypeptide: Anthranilate phosphoribosyltransferase (341 aa).

5-phospho-alpha-D-ribose 1-diphosphate is bound by residues glycine 79, 82-83, threonine 87, 89-92, 107-115, and serine 119; these read GD, NIST, and KHGNRAVSS. An anthranilate-binding site is contributed by glycine 79. Serine 91 lines the Mg(2+) pocket. Anthranilate is bound at residue asparagine 110. Arginine 165 is a binding site for anthranilate. Mg(2+) contacts are provided by aspartate 224 and glutamate 225.

It belongs to the anthranilate phosphoribosyltransferase family. Homodimer. It depends on Mg(2+) as a cofactor.

It catalyses the reaction N-(5-phospho-beta-D-ribosyl)anthranilate + diphosphate = 5-phospho-alpha-D-ribose 1-diphosphate + anthranilate. It functions in the pathway amino-acid biosynthesis; L-tryptophan biosynthesis; L-tryptophan from chorismate: step 2/5. Catalyzes the transfer of the phosphoribosyl group of 5-phosphorylribose-1-pyrophosphate (PRPP) to anthranilate to yield N-(5'-phosphoribosyl)-anthranilate (PRA). This chain is Anthranilate phosphoribosyltransferase, found in Bacillus cereus (strain G9842).